Here is a 487-residue protein sequence, read N- to C-terminus: uncharacterized protein (487 aa).

Disordered regions lie at residues 35–153 (VSRK…SGDQ), 237–345 (NTTK…AKAL), and 358–395 (QKRK…SSAA). The segment covering 54 to 96 (FDQEDILDTVPEQTDENEDEAGDDELESEKEELDYDEEEDDED) has biased composition (acidic residues). A compositionally biased stretch (basic and acidic residues) spans 97–132 (RRERTSRYTSEKKGSRKDSVEGDENKKENGQDETKR). The span at 241–253 (SKSRGRDTRKRRS) shows a compositional bias: basic residues. A compositionally biased stretch (low complexity) spans 254-264 (SSYSSTSSSSD). 2 stretches are compositionally biased toward basic and acidic residues: residues 273 to 338 (SRSD…KHSA) and 358 to 383 (QKRK…KKEV). The segment covering 385–395 (TTVSTNTSSAA) has biased composition (low complexity).

This is an uncharacterized protein from Caenorhabditis elegans.